A 449-amino-acid polypeptide reads, in one-letter code: Tubulin alpha-8 chain (449 aa).

The MREC motif motif lies at 1 to 4; the sequence is MREC. Residues glutamine 11, glutamate 71, serine 140, glycine 144, threonine 145, threonine 179, asparagine 206, and asparagine 228 each contribute to the GTP site. Glutamate 71 lines the Mg(2+) pocket. Residue glutamate 254 is part of the active site.

It belongs to the tubulin family. In terms of assembly, dimer of alpha and beta chains. A typical microtubule is a hollow water-filled tube with an outer diameter of 25 nm and an inner diameter of 15 nM. Alpha-beta heterodimers associate head-to-tail to form protofilaments running lengthwise along the microtubule wall with the beta-tubulin subunit facing the microtubule plus end conferring a structural polarity. Microtubules usually have 13 protofilaments but different protofilament numbers can be found in some organisms and specialized cells. The cofactor is Mg(2+). Some glutamate residues at the C-terminus are polyglycylated, resulting in polyglycine chains on the gamma-carboxyl group. Glycylation is mainly limited to tubulin incorporated into axonemes (cilia and flagella) whereas glutamylation is prevalent in neuronal cells, centrioles, axonemes, and the mitotic spindle. Both modifications can coexist on the same protein on adjacent residues, and lowering polyglycylation levels increases polyglutamylation, and reciprocally. Cilia and flagella glycylation is required for their stability and maintenance. Flagella glycylation controls sperm motility. In terms of processing, some glutamate residues at the C-terminus are polyglutamylated, resulting in polyglutamate chains on the gamma-carboxyl group. Polyglutamylation plays a key role in microtubule severing by spastin (SPAST). SPAST preferentially recognizes and acts on microtubules decorated with short polyglutamate tails: severing activity by SPAST increases as the number of glutamates per tubulin rises from one to eight, but decreases beyond this glutamylation threshold. Glutamylation is also involved in cilia motility. Post-translationally, the C-terminal phenylalanine residue is cleaved by MATCAP1/KIAA0895L.

It localises to the cytoplasm. Its subcellular location is the cytoskeleton. The enzyme catalyses GTP + H2O = GDP + phosphate + H(+). Functionally, tubulin is the major constituent of microtubules, a cylinder consisting of laterally associated linear protofilaments composed of alpha- and beta-tubulin heterodimers. Microtubules grow by the addition of GTP-tubulin dimers to the microtubule end, where a stabilizing cap forms. Below the cap, tubulin dimers are in GDP-bound state, owing to GTPase activity of alpha-tubulin. The chain is Tubulin alpha-8 chain (Tuba8) from Rattus norvegicus (Rat).